A 614-amino-acid polypeptide reads, in one-letter code: 1-deoxy-D-xylulose-5-phosphate synthase (614 aa).

Residues histidine 74 and 115 to 117 each bind thiamine diphosphate; that span reads AHS. Aspartate 146 provides a ligand contact to Mg(2+). Thiamine diphosphate is bound by residues 147–148, asparagine 175, tyrosine 282, and glutamate 363; that span reads GA. Asparagine 175 is a binding site for Mg(2+).

Belongs to the transketolase family. DXPS subfamily. As to quaternary structure, homodimer. Mg(2+) serves as cofactor. The cofactor is thiamine diphosphate.

It carries out the reaction D-glyceraldehyde 3-phosphate + pyruvate + H(+) = 1-deoxy-D-xylulose 5-phosphate + CO2. It functions in the pathway metabolic intermediate biosynthesis; 1-deoxy-D-xylulose 5-phosphate biosynthesis; 1-deoxy-D-xylulose 5-phosphate from D-glyceraldehyde 3-phosphate and pyruvate: step 1/1. In terms of biological role, catalyzes the acyloin condensation reaction between C atoms 2 and 3 of pyruvate and glyceraldehyde 3-phosphate to yield 1-deoxy-D-xylulose-5-phosphate (DXP). The chain is 1-deoxy-D-xylulose-5-phosphate synthase from Nitrosomonas europaea (strain ATCC 19718 / CIP 103999 / KCTC 2705 / NBRC 14298).